The primary structure comprises 475 residues: Ribulose bisphosphate carboxylase large chain (475 aa).

Residues 1 to 2 (MS) constitute a propeptide that is removed on maturation. Proline 3 is subject to N-acetylproline. Lysine 14 bears the N6,N6,N6-trimethyllysine mark. Residues asparagine 123 and threonine 173 each contribute to the substrate site. Residue lysine 175 is the Proton acceptor of the active site. Lysine 177 is a substrate binding site. Positions 201, 203, and 204 each coordinate Mg(2+). Lysine 201 carries the N6-carboxylysine modification. Histidine 294 functions as the Proton acceptor in the catalytic mechanism. Residues arginine 295, histidine 327, and serine 379 each contribute to the substrate site.

This sequence belongs to the RuBisCO large chain family. Type I subfamily. In terms of assembly, heterohexadecamer of 8 large chains and 8 small chains; disulfide-linked. The disulfide link is formed within the large subunit homodimers. Requires Mg(2+) as cofactor. Post-translationally, the disulfide bond which can form in the large chain dimeric partners within the hexadecamer appears to be associated with oxidative stress and protein turnover.

It is found in the plastid. Its subcellular location is the chloroplast. The enzyme catalyses 2 (2R)-3-phosphoglycerate + 2 H(+) = D-ribulose 1,5-bisphosphate + CO2 + H2O. It carries out the reaction D-ribulose 1,5-bisphosphate + O2 = 2-phosphoglycolate + (2R)-3-phosphoglycerate + 2 H(+). RuBisCO catalyzes two reactions: the carboxylation of D-ribulose 1,5-bisphosphate, the primary event in carbon dioxide fixation, as well as the oxidative fragmentation of the pentose substrate in the photorespiration process. Both reactions occur simultaneously and in competition at the same active site. The chain is Ribulose bisphosphate carboxylase large chain from Eucalyptus globulus subsp. globulus (Tasmanian blue gum).